The following is a 375-amino-acid chain: Growth/differentiation factor 8 (375 aa).

The signal sequence occupies residues 1–23 (MQKLQLCVYIYLFMLIVAGPVDL). A propeptide spanning residues 24 to 266 (NENSEQKENV…VTDTPKRSRR (243 aa)) is cleaved from the precursor. A glycan (N-linked (GlcNAc...) asparagine) is linked at asparagine 71. Cystine bridges form between cysteine 272–cysteine 282, cysteine 281–cysteine 340, cysteine 309–cysteine 372, and cysteine 313–cysteine 374.

It belongs to the TGF-beta family. In terms of assembly, homodimer; disulfide-linked. Interacts with WFIKKN2, leading to inhibit its activity. Interacts with FSTL3. Synthesized as large precursor molecule that undergoes proteolytic cleavage to generate an N-terminal propeptide and a disulfide linked C-terminal dimer, which is the biologically active molecule. The circulating form consists of a latent complex of the C-terminal dimer and other proteins, including its propeptide, which maintain the C-terminal dimer in a latent, inactive state. Ligand activation requires additional cleavage of the prodomain by a tolloid-like metalloproteinase.

The protein localises to the secreted. In terms of biological role, acts specifically as a negative regulator of skeletal muscle growth. The protein is Growth/differentiation factor 8 (MSTN) of Pan paniscus (Pygmy chimpanzee).